We begin with the raw amino-acid sequence, 358 residues long: Alanine racemase (358 aa).

K35 serves as the catalytic Proton acceptor; specific for D-alanine. An N6-(pyridoxal phosphate)lysine modification is found at K35. R130 provides a ligand contact to substrate. Y255 serves as the catalytic Proton acceptor; specific for L-alanine. M303 contributes to the substrate binding site.

The protein belongs to the alanine racemase family. It depends on pyridoxal 5'-phosphate as a cofactor.

It catalyses the reaction L-alanine = D-alanine. It participates in amino-acid biosynthesis; D-alanine biosynthesis; D-alanine from L-alanine: step 1/1. Its function is as follows. Catalyzes the interconversion of L-alanine and D-alanine. May also act on other amino acids. In Shewanella sediminis (strain HAW-EB3), this protein is Alanine racemase (alr).